The following is an 829-amino-acid chain: Cation/H(+) antiporter 14 (829 aa).

The next 12 membrane-spanning stretches (helical) occupy residues 48 to 68 (YAMPLMLLQMSVIIITSRLLY), 77 to 97 (GMISAQVLAGIILGPSLFGQS), 117 to 137 (SNLGFFIHLFLLGLRIDASII), 145 to 165 (ILIGTASYALPFSLGNLTVLF), 180 to 200 (ISTVISLNAMTSFPVTTTVLA), 215 to 235 (NCSIVCEAFSWIVALVFRMFL), 240 to 260 (LASVWSFVWVTALILVIFFVC), 281 to 301 (IPFFPIIMVLLTISLTSEVLG), 329 to 349 (LEMFATSLMLPCFISISGLQT), 361 to 383 (IIEAVILITYGCKFLGTAAASAY), 392 to 412 (FSLALLMCCQGVIEIYTCVMW), and 425 to 445 (LLIITLLLVTGISRFLVVCLY). At S827 the chain carries Phosphoserine.

It belongs to the monovalent cation:proton antiporter 2 (CPA2) transporter (TC 2.A.37) family. CHX (TC 2.A.37.4) subfamily. As to expression, preferentially expressed in pollen but also detected in vegetative tissues like leaf trichomes and root vascular tissues.

It is found in the membrane. In terms of biological role, may operate as a cation/H(+) antiporter. This Arabidopsis thaliana (Mouse-ear cress) protein is Cation/H(+) antiporter 14 (CHX14).